Consider the following 473-residue polypeptide: Photosystem II CP43 reaction center protein (473 aa).

The propeptide occupies 1–14 (MKTLYSLRRFYHVE). The residue at position 15 (Thr15) is an N-acetylthreonine. A Phosphothreonine modification is found at Thr15. 5 consecutive transmembrane segments (helical) span residues 69 to 93 (LFEV…PHLA), 134 to 155 (LLGP…KDRN), 178 to 200 (KALY…RKIT), 255 to 275 (KPFA…LSYS), and 291 to 312 (WFNN…ASQA). Position 367 (Glu367) interacts with [CaMn4O5] cluster. A helical membrane pass occupies residues 447 to 471 (RARAAAAGFEKGIDRDLEPVLFMTP).

This sequence belongs to the PsbB/PsbC family. PsbC subfamily. As to quaternary structure, PSII is composed of 1 copy each of membrane proteins PsbA, PsbB, PsbC, PsbD, PsbE, PsbF, PsbH, PsbI, PsbJ, PsbK, PsbL, PsbM, PsbT, PsbX, PsbY, PsbZ, Psb30/Ycf12, at least 3 peripheral proteins of the oxygen-evolving complex and a large number of cofactors. It forms dimeric complexes. Requires Binds multiple chlorophylls and provides some of the ligands for the Ca-4Mn-5O cluster of the oxygen-evolving complex. It may also provide a ligand for a Cl- that is required for oxygen evolution. PSII binds additional chlorophylls, carotenoids and specific lipids. as cofactor.

The protein localises to the plastid. Its subcellular location is the chloroplast thylakoid membrane. Its function is as follows. One of the components of the core complex of photosystem II (PSII). It binds chlorophyll and helps catalyze the primary light-induced photochemical processes of PSII. PSII is a light-driven water:plastoquinone oxidoreductase, using light energy to abstract electrons from H(2)O, generating O(2) and a proton gradient subsequently used for ATP formation. The protein is Photosystem II CP43 reaction center protein of Carica papaya (Papaya).